The sequence spans 342 residues: Ribosomal RNA small subunit methyltransferase C (342 aa).

It belongs to the methyltransferase superfamily. RsmC family. As to quaternary structure, monomer.

Its subcellular location is the cytoplasm. The catalysed reaction is guanosine(1207) in 16S rRNA + S-adenosyl-L-methionine = N(2)-methylguanosine(1207) in 16S rRNA + S-adenosyl-L-homocysteine + H(+). Functionally, specifically methylates the guanine in position 1207 of 16S rRNA in the 30S particle. This Shewanella sp. (strain MR-7) protein is Ribosomal RNA small subunit methyltransferase C.